A 204-amino-acid chain; its full sequence is MAEISVADIRKLRELTGAGMSDVKKALVDNAGDFEKAKSWLREKGKAQVAKRAARSAANGLVESYLHRTDPQLPPTLGVLVELRCETDFVAKTEDFKQLARDLAQHIAAADPLYVTAEQIPNEVLEAERKIYEAAAREEGKPEQAIAKIVEGRVNGYVKSSVLLDQPWVKDGKVTIRALLDQAGASLGEKIEVGRFSRFNIRQA.

An involved in Mg(2+) ion dislocation from EF-Tu region spans residues 87-90 (TDFV).

The protein belongs to the EF-Ts family.

It localises to the cytoplasm. Associates with the EF-Tu.GDP complex and induces the exchange of GDP to GTP. It remains bound to the aminoacyl-tRNA.EF-Tu.GTP complex up to the GTP hydrolysis stage on the ribosome. This chain is Elongation factor Ts, found in Frankia casuarinae (strain DSM 45818 / CECT 9043 / HFP020203 / CcI3).